Here is a 530-residue protein sequence, read N- to C-terminus: MSANIDDVPIEVSKVFDTILVLDFGSQYSHLITRRLREFNVYAEMLPCTQKIAELSWKPKGIILSGGPYSVYAEDAPHVDHDIFKLGVPILGICYGMQELAWINGKGVARGDKREYGPATLNVEDPECALFKGVDHSQVWMSHGDKLHALPTGFKVVATSDNSPFCGISNESEHIYGIQFHPEVTHTVQGKKLLKNFAVDICQAKTNWSMENFIDTEIARIKKLVGPTAEVIGAVSGGVDSTVGAKIMKEAIGDRFHAIYVDNGVMRKNETESVKKTLDEGLGINLTVVDAGDLFLGRLKGVTDPEKKRKIIGNTFIHVFEEEAAKIKPRDGSEIEYLLQGTLYPDVIESISFKGPSQTIKTHHNVGGLLEDMKLKLIEPLRELFKDEVRHLGELLGVPEDLVWRHPFPGPGLAIRVLGEVTKEQVKIAREADAIFIEEIKKAGLYRQISQAFAALLPVKSVGVMGDQRTYEQVIALRAIETLDFMTADWFIFEAAFLKKVASRIVNEVDGVARVTYDITSKPPATVEWE.

The Glutamine amidotransferase type-1 domain maps to Thr-18 to Asn-207. Cys-94 acts as the Nucleophile in catalysis. Residues His-181 and Glu-183 contribute to the active site. A GMPS ATP-PPase domain is found at Trp-208–Arg-405. Residue Ser-236–Thr-242 coordinates ATP. Arg-309, Asp-467, Lys-522, and Glu-528 together coordinate XMP.

Homodimer. Mg(2+) serves as cofactor.

It is found in the cytoplasm. The protein resides in the cytosol. The catalysed reaction is XMP + L-glutamine + ATP + H2O = GMP + L-glutamate + AMP + diphosphate + 2 H(+). It functions in the pathway purine metabolism; GMP biosynthesis; GMP from XMP (L-Gln route): step 1/1. Catalyzes the conversion of xanthine monophosphate (XMP) to GMP in the presence of glutamine and ATP through an adenyl-XMP intermediate. The chain is GMP synthase [glutamine-hydrolyzing] (GUA1) from Candida albicans (strain SC5314 / ATCC MYA-2876) (Yeast).